A 492-amino-acid chain; its full sequence is Osmoregulated proline transporter OpuE (492 aa).

13 consecutive transmembrane segments (helical) span residues 3–23, 40–60, 62–82, 125–145, 161–181, 190–210, 224–244, 271–291, 314–334, 365–385, 394–414, 424–444, and 449–469; these read IEII…GWYA, LGPF…WMLM, VPGA…GLTI, IVSA…GMVS, GLFL…FLAV, AIMF…VGGV, LLDI…AWGL, IGMS…LIGV, ILFH…AIMS, LVMI…LLSL, LVGY…LLSL, ALAA…TGLA, and VYEI…VSMI.

The protein belongs to the sodium:solute symporter (SSF) (TC 2.A.21) family.

It localises to the cell membrane. It catalyses the reaction L-proline(in) + Na(+)(in) = L-proline(out) + Na(+)(out). In terms of biological role, catalyzes the uptake of extracellular proline under high-osmolarity growth conditions. Essential for the use of proline present in the environment as an osmoprotectant. This is Osmoregulated proline transporter OpuE from Bacillus subtilis (strain 168).